A 518-amino-acid polypeptide reads, in one-letter code: Chromosomal replication initiator protein DnaA (518 aa).

The interval 1–72 (MTLAEFWPLC…VREELAAGRS (72 aa)) is domain I, interacts with DnaA modulators. The interval 72–180 (SAFVFKPGEG…DAEEARYEQT (109 aa)) is domain II. The segment at 145–172 (EPRQAAGSASRPESVAVAKARTDVQRDA) is disordered. The domain III, AAA+ region stretch occupies residues 181–397 (NLSPDYTFDT…GAFNRVGASS (217 aa)). G225, G227, K228, and T229 together coordinate ATP. Residues 398 to 518 (RFMNRPVIDI…YEKLLILIQN (121 aa)) are domain IV, binds dsDNA.

It belongs to the DnaA family. Oligomerizes as a right-handed, spiral filament on DNA at oriC.

It localises to the cytoplasm. Its function is as follows. Plays an essential role in the initiation and regulation of chromosomal replication. ATP-DnaA binds to the origin of replication (oriC) to initiate formation of the DNA replication initiation complex once per cell cycle. Binds the DnaA box (a 9 base pair repeat at the origin) and separates the double-stranded (ds)DNA. Forms a right-handed helical filament on oriC DNA; dsDNA binds to the exterior of the filament while single-stranded (ss)DNA is stabiized in the filament's interior. The ATP-DnaA-oriC complex binds and stabilizes one strand of the AT-rich DNA unwinding element (DUE), permitting loading of DNA polymerase. After initiation quickly degrades to an ADP-DnaA complex that is not apt for DNA replication. Binds acidic phospholipids. The chain is Chromosomal replication initiator protein DnaA from Neisseria meningitidis serogroup B (strain ATCC BAA-335 / MC58).